Consider the following 334-residue polypeptide: Ornithine carbamoyltransferase (334 aa).

Carbamoyl phosphate-binding positions include S57–T60, Q84, R108, and H135–Q138. Residues N169, D233, and S237–M238 each bind L-ornithine. Carbamoyl phosphate contacts are provided by residues C275–L276 and R320.

The protein belongs to the aspartate/ornithine carbamoyltransferase superfamily. OTCase family.

Its subcellular location is the cytoplasm. It catalyses the reaction carbamoyl phosphate + L-ornithine = L-citrulline + phosphate + H(+). Its pathway is amino-acid biosynthesis; L-arginine biosynthesis; L-arginine from L-ornithine and carbamoyl phosphate: step 1/3. Its function is as follows. Reversibly catalyzes the transfer of the carbamoyl group from carbamoyl phosphate (CP) to the N(epsilon) atom of ornithine (ORN) to produce L-citrulline. The protein is Ornithine carbamoyltransferase of Vibrio campbellii (strain ATCC BAA-1116).